Here is a 101-residue protein sequence, read N- to C-terminus: NAD(P)H-quinone oxidoreductase subunit 4L, chloroplastic (101 aa).

3 helical membrane passes run 2–22, 32–52, and 61–81; these read MFEHVLFLSVYLFSIGIYGLI, ICLELILNSINLNLVTFSDLF, and IFAIFVIALAAAEAAIGLSIL.

Belongs to the complex I subunit 4L family. In terms of assembly, NDH is composed of at least 16 different subunits, 5 of which are encoded in the nucleus.

It is found in the plastid. The protein localises to the chloroplast thylakoid membrane. The enzyme catalyses a plastoquinone + NADH + (n+1) H(+)(in) = a plastoquinol + NAD(+) + n H(+)(out). It carries out the reaction a plastoquinone + NADPH + (n+1) H(+)(in) = a plastoquinol + NADP(+) + n H(+)(out). Its function is as follows. NDH shuttles electrons from NAD(P)H:plastoquinone, via FMN and iron-sulfur (Fe-S) centers, to quinones in the photosynthetic chain and possibly in a chloroplast respiratory chain. The immediate electron acceptor for the enzyme in this species is believed to be plastoquinone. Couples the redox reaction to proton translocation, and thus conserves the redox energy in a proton gradient. This is NAD(P)H-quinone oxidoreductase subunit 4L, chloroplastic from Agrostis stolonifera (Creeping bentgrass).